The sequence spans 331 residues: Cathepsin S (331 aa).

The signal sequence occupies residues 1 to 16 (MKWLVGLLPLCSYAVA). A propeptide spans 17–114 (QVHKDPTLDH…VTYRSNSNQK (98 aa)) (activation peptide). Asparagine 104 carries N-linked (GlcNAc...) asparagine glycosylation. Cystine bridges form between cysteine 126/cysteine 224, cysteine 136/cysteine 180, cysteine 170/cysteine 213, and cysteine 272/cysteine 320. Cysteine 139 is an active-site residue. Catalysis depends on residues histidine 278 and asparagine 298.

It belongs to the peptidase C1 family.

The protein resides in the lysosome. Its subcellular location is the secreted. It localises to the cytoplasmic vesicle. It is found in the phagosome. The catalysed reaction is Similar to cathepsin L, but with much less activity on Z-Phe-Arg-|-NHMec, and more activity on the Z-Val-Val-Arg-|-Xaa compound.. Its function is as follows. Thiol protease. Key protease responsible for the removal of the invariant chain from MHC class II molecules and MHC class II antigen presentation. The bond-specificity of this proteinase is in part similar to the specificities of cathepsin L. This chain is Cathepsin S (CTSS), found in Canis lupus familiaris (Dog).